Consider the following 258-residue polypeptide: Global transcriptional regulator CodY (258 aa).

The segment at 1–156 (MSSLLSKTRR…SATIVGMEML (156 aa)) is GAF domain. A DNA-binding region (H-T-H motif) is located at residues 204 to 223 (ASKIADKVGITRSVIVNALR).

The protein belongs to the CodY family.

The protein resides in the cytoplasm. Its function is as follows. DNA-binding global transcriptional regulator which is involved in the adaptive response to starvation and acts by directly or indirectly controlling the expression of numerous genes in response to nutrient availability. During rapid exponential growth, CodY is highly active and represses genes whose products allow adaptation to nutrient depletion. The polypeptide is Global transcriptional regulator CodY (Clostridium botulinum (strain Alaska E43 / Type E3)).